A 537-amino-acid chain; its full sequence is Cryptic loci regulator 2 (537 aa).

The interval 96 to 116 (VSARHVRPNPKSSKDTLEKQP) is disordered. Residues 107 to 116 (SSKDTLEKQP) are compositionally biased toward basic and acidic residues.

Interacts with clr3.

It is found in the nucleus. The protein resides in the chromosome. Its subcellular location is the centromere. The protein localises to the telomere. Required for deacetylation in the mating-type region and the centromere. Acts upstream of the histone deacetylases to promote transcriptional silencing. Required for proper positioning of nucleosomes at heterochromatic loci and for transcriptional gene silencing (TGS) function of the Snf2/Hdac-containing repressor complex (SHREC). The chain is Cryptic loci regulator 2 (clr2) from Schizosaccharomyces pombe (strain 972 / ATCC 24843) (Fission yeast).